The primary structure comprises 195 residues: CD70 antigen (195 aa).

Residues 1 to 23 lie on the Cytoplasmic side of the membrane; that stretch reads MPEEGRPCPWVRWSGTAFQRQWP. A helical; Signal-anchor for type II membrane protein transmembrane segment spans residues 24 to 44; sequence WLLLVVFITVFCCWFHCSGLL. At 45–195 the chain is on the extracellular side; the sequence is SKQQQRLLEH…TFFGVQWICP (151 aa). In terms of domain architecture, THD spans 58-193; it reads HTAELQLNLT…DETFFGVQWI (136 aa). N-linked (GlcNAc...) asparagine glycans are attached at residues asparagine 65 and asparagine 116. Disulfide bonds link cysteine 117–cysteine 153 and cysteine 135–cysteine 170. Asparagine 172 carries N-linked (GlcNAc...) asparagine glycosylation.

The protein belongs to the tumor necrosis factor family. Homotrimer. Post-translationally, N-glycosylated. As to expression, very low level of expression. Detected in splenocytes and thymocytes.

Its subcellular location is the cell membrane. Functionally, expressed at the plasma membrane of B cells, it is the ligand of the CD27 receptor which is specifically expressed at the surface of T cells. The CD70-CD27 signaling pathway mediates antigen-specific T cell activation and expansion which in turn provides immune surveillance of B cells. This chain is CD70 antigen, found in Mus musculus (Mouse).